A 140-amino-acid chain; its full sequence is Large ribosomal subunit protein bL17 (140 aa).

The protein belongs to the bacterial ribosomal protein bL17 family. As to quaternary structure, part of the 50S ribosomal subunit. Contacts protein L32.

In Beijerinckia indica subsp. indica (strain ATCC 9039 / DSM 1715 / NCIMB 8712), this protein is Large ribosomal subunit protein bL17.